Consider the following 889-residue polypeptide: Alanine--tRNA ligase (889 aa).

The Zn(2+) site is built by His574, His578, Cys682, and His686.

The protein belongs to the class-II aminoacyl-tRNA synthetase family. Zn(2+) is required as a cofactor.

It localises to the cytoplasm. The enzyme catalyses tRNA(Ala) + L-alanine + ATP = L-alanyl-tRNA(Ala) + AMP + diphosphate. Catalyzes the attachment of alanine to tRNA(Ala) in a two-step reaction: alanine is first activated by ATP to form Ala-AMP and then transferred to the acceptor end of tRNA(Ala). Also edits incorrectly charged Ser-tRNA(Ala) and Gly-tRNA(Ala) via its editing domain. This Orientia tsutsugamushi (strain Ikeda) (Rickettsia tsutsugamushi) protein is Alanine--tRNA ligase.